Consider the following 668-residue polypeptide: MAHDTEALEETSVVKFKNQDFRFLRDRCLSRGQLFIDDTFPAEASSIGQKLLMGKRLPKLEWKRPQDLSFGPPHFILEGASRFDIQQGRAGDCWFLAALGSLTQNPQCLQKILMNQSFSYQYAGIFHFRFWQCGQWVEVVIDDRLPVVGNNFCFVHPRRGNQEFWPCLMEKAYAKLLGSYSQLHYGYLPDALVDLTGGVVTRINLHSSPSDLLMVVKTAVQTGSMVACATPKWLTEESEVMENGLVSQHAYTVTGAEKIQYRRGWEEIIRLWNPWGNTEWRGRWGDGSQEWWETHGSRKSQLYENKDDGEFWMSCRDFHENFSCLYICSQFPITMDPGVTPNESWRQMRFKNQVISGNTAGGDGRDIQYLFDVQEPMDGNNVIVAFTVMPQSLKTEEWPFPLQFQVFKVDSQFQKFQKRLPPAFFSQFRDAAQGIDYVTKRNFTKSFHLSPGTYVVVASAHGKEVEFLLRIFLKMPHKDRNPNSSFNLKALKGSLSENESPKSSFHRYMDQGLDIDASQLQSLLNQEYLTGPPGDTFSLDQCQSIMALMDLKVNGRLDREEFARLQSRLIHCQHVFQHIQRSQGVLRSSDLWEVIESTDFLSGVLLSKELLSLMTLRYSDSSGRLSFPSLVCFLIRLETMSKAFRNLSKDGKSIYLTEMEWMKLVMYS.

The 298-residue stretch at 34–331 (LFIDDTFPAE…FSCLYICSQF (298 aa)) folds into the Calpain catalytic domain. Catalysis depends on residues C93, H249, and N273. EF-hand domains follow at residues 537–572 (FSLDQCQSIMALMDLKVNGRLDREEFARLQSRLIHC) and 635–668 (IRLETMSKAFRNLSKDGKSIYLTEMEWMKLVMYS).

It belongs to the peptidase C2 family.

Functionally, probable non-lysosomal thiol-protease. The chain is Calpain-13 (Capn13) from Rattus norvegicus (Rat).